A 258-amino-acid polypeptide reads, in one-letter code: Arylamine N-acetyltransferase 1 (258 aa).

Cysteine 59 functions as the Acyl-thioester intermediate in the catalytic mechanism. 97–98 (IH) provides a ligand contact to substrate. Active-site residues include histidine 98 and aspartate 113. Tyrosine 199 and threonine 205 together coordinate CoA.

This sequence belongs to the arylamine N-acetyltransferase family.

The protein localises to the cytoplasm. It catalyses the reaction an arylamine + acetyl-CoA = an N-acetylarylamine + CoA. In terms of biological role, participates in the detoxification of a plethora of hydrazine and arylamine drugs. This Felis catus (Cat) protein is Arylamine N-acetyltransferase 1 (NAT1).